Consider the following 621-residue polypeptide: DEAD-box ATP-dependent RNA helicase 39 (621 aa).

Positions 112-140 match the Q motif motif; the sequence is ENFQELGLSEEVMGALQELNIEVPTEIQC. The Helicase ATP-binding domain occupies 143-330; that stretch reads IPAVMERKSV…DEEFQGIEHL (188 aa). 156 to 163 contacts ATP; sequence SHTGSGKT. The DEAD box motif lies at 270–273; that stretch reads DEAD. The Helicase C-terminal domain maps to 355–505; the sequence is KLEALLQVLE…LESLTTDNVR (151 aa). The segment at 497–621 is disordered; sequence ESLTTDNVRR…RGKSSSARAS (125 aa). Residues 503–537 show a composition bias toward basic and acidic residues; the sequence is NVRRDAARTHITQEKGRSVKQIREVSKQRNSRDKP. Low complexity predominate over residues 555 to 572; the sequence is KSSSSSFSKPRKASSPPE.

It belongs to the DEAD box helicase family.

It carries out the reaction ATP + H2O = ADP + phosphate + H(+). The protein is DEAD-box ATP-dependent RNA helicase 39 (RH39) of Arabidopsis thaliana (Mouse-ear cress).